The chain runs to 182 residues: MMYRYVKDAWKNPKDSYVRELMWERAPKWRRDPVIKRIERPTRIDRARALGYRAKPGYIVVRTRVRRGSQRKTRFKAGRRPTRMGVKKITTAKSIKRIAEERVARKYPNMEVLNSYWVWEDGKYKFYEVILVDPNHLAIKNDPKIYWICVKQHRGRVFRGLISEGKKNRGLRNRGKGAEKVR.

It belongs to the eukaryotic ribosomal protein eL15 family.

The chain is Large ribosomal subunit protein eL15 (rpl15e) from Methanothermobacter thermautotrophicus (strain ATCC 29096 / DSM 1053 / JCM 10044 / NBRC 100330 / Delta H) (Methanobacterium thermoautotrophicum).